We begin with the raw amino-acid sequence, 173 residues long: Protein-export protein SecB (173 aa).

Residues 148 to 173 (QQQKQRREQGTSDSAPSGSPDNGGRQ) form a disordered region. Polar residues predominate over residues 158–167 (TSDSAPSGSP).

Belongs to the SecB family. As to quaternary structure, homotetramer, a dimer of dimers. One homotetramer interacts with 1 SecA dimer.

The protein localises to the cytoplasm. One of the proteins required for the normal export of preproteins out of the cell cytoplasm. It is a molecular chaperone that binds to a subset of precursor proteins, maintaining them in a translocation-competent state. It also specifically binds to its receptor SecA. This Halorhodospira halophila (strain DSM 244 / SL1) (Ectothiorhodospira halophila (strain DSM 244 / SL1)) protein is Protein-export protein SecB.